The primary structure comprises 380 residues: Ceramide synthase 2 (380 aa).

The Lumenal segment spans residues 1 to 40; sequence MLQTLYDYFWWERLWLPVNLTWADLEDRDGRVYAKASDLY. N-linked (GlcNAc...) asparagine glycosylation is present at Asn19. The chain crosses the membrane as a helical span at residues 41–61; it reads ITLPLALLFLIVRYFFELYVA. Residues 67–128 are homeobox-like; the sequence is LLNIKEKTRL…RRRRNQDRPS (62 aa). Residues 131 to 332 form the TLC domain; that stretch reads KKFREASWRF…ILRMAHKFIT (202 aa). A run of 4 helical transmembrane segments spans residues 140–160, 181–201, 209–229, and 264–284; these read FTFYLIAFIAGMAVIVDKPWF, WYYMIELSFYWSLLFSIASDV, QIIHHVATIILISFSWFANYI, and IFIVFAIVFIITRLVILPFWI. Residues 291-300 carry the Last loop motif motif; it reads YPLELYPAFF. A helical transmembrane segment spans residues 304–324; the sequence is FFNSMMGVLQLLHIFWAYLIL. Residues 325-380 lie on the Cytoplasmic side of the membrane; that stretch reads RMAHKFITGKLVEDERSDREETESSEGEEAAAGGGAKSRPLANGHPILNNNHRKND. The interval 338–380 is disordered; it reads DERSDREETESSEGEEAAAGGGAKSRPLANGHPILNNNHRKND. At Ser341 the chain carries Phosphoserine. Positions 344 to 353 are enriched in acidic residues; it reads EETESSEGEE. Thr346 carries the phosphothreonine modification. 2 positions are modified to phosphoserine: Ser348 and Ser349.

As to quaternary structure, interacts with ATP6V0C, ASGR1, ASGR2 and SLC22A1/OCT1. Interacts with ELOV1, HSD17B12 and TECR. Interacts with NDUFS2. Interacts with PAQR4; the interaction regulates the stability and activity of CERS2 and is inhibited in presence of ceramides. In terms of processing, acetylated. Deacetylation by SIRT3 increases enzyme activity and promotes mitochondrial ceramide accumulation. Post-translationally, phosphorylated at the C-terminus by CK2, leading to increase the ceramide synthase activity. Expressed in kidney, liver, brain, heart, placenta and lung.

The protein resides in the endoplasmic reticulum membrane. The catalysed reaction is a very long-chain fatty acyl-CoA + a sphingoid base = an N-(very-long-chain fatty acyl)-sphingoid base + CoA + H(+). It carries out the reaction docosanoyl-CoA + sphinganine = N-docosanoylsphinganine + CoA + H(+). The enzyme catalyses tetracosanoyl-CoA + sphinganine = N-tetracosanoylsphinganine + CoA + H(+). It catalyses the reaction hexacosanoyl-CoA + sphinganine = N-hexacosanoylsphinganine + CoA + H(+). The catalysed reaction is (15Z)-tetracosenoyl-CoA + sphinganine = N-(15Z-tetracosenoyl)-sphinganine + CoA + H(+). It carries out the reaction 2-hydroxytetracosanoyl-CoA + sphinganine = N-(2-hydroxytetracosanoyl)-sphinganine + CoA + H(+). The enzyme catalyses 2-hydroxydocosanoyl-CoA + sphinganine = N-(2-hydroxydocosanoyl)-sphinganine + CoA + H(+). It catalyses the reaction 2-hydroxytetracosenoyl-CoA + sphinganine = N-(2-hydroxytetracosenoyl)-sphinganine + CoA + H(+). The catalysed reaction is tetracosenoyl-CoA + sphinganine = an N-tetracosenoylsphinganine + CoA + H(+). It carries out the reaction hexacosenoyl-CoA + sphinganine = N-hexacosenoylsphinganine + CoA + H(+). The enzyme catalyses tetracosanoyl-CoA + sphing-4-enine = N-tetracosanoyl-sphing-4-enine + CoA + H(+). It catalyses the reaction tetracosenoyl-CoA + sphing-4-enine = N-(tetracosenoyl)-sphing-4-enine + CoA + H(+). The catalysed reaction is heptadecasphing-4-enine + tetracosanoyl-CoA = N-tetracosanoyl-heptadecasphing-4-enine + CoA + H(+). It carries out the reaction a fatty acyl-CoA + sphing-4-enine = an N-acylsphing-4-enine + CoA + H(+). The enzyme catalyses sphing-4-enine + hexadecanoyl-CoA = N-hexadecanoylsphing-4-enine + CoA + H(+). It catalyses the reaction sphing-4-enine + octadecanoyl-CoA = N-octadecanoylsphing-4-enine + CoA + H(+). The catalysed reaction is eicosanoyl-CoA + sphing-4-enine = N-eicosanoyl-sphing-4-enine + CoA + H(+). It carries out the reaction sphinganine + hexadecanoyl-CoA = N-hexadecanoylsphinganine + CoA + H(+). The enzyme catalyses sphinganine + octadecanoyl-CoA = N-(octadecanoyl)-sphinganine + CoA + H(+). It catalyses the reaction sphinganine + (9Z)-octadecenoyl-CoA = N-(9Z-octadecenoyl)-sphinganine + CoA + H(+). The catalysed reaction is eicosanoyl-CoA + sphinganine = N-eicosanoylsphinganine + CoA + H(+). The protein operates within lipid metabolism; sphingolipid metabolism. Ceramide synthase activity is inhibited by sphingosine-1-phosphate. In terms of biological role, ceramide synthase that catalyzes the transfer of the acyl chain from acyl-CoA to a sphingoid base, with high selectivity toward very-long-chain fatty acyl-CoA (chain length C22-C27). N-acylates sphinganine and sphingosine bases to form dihydroceramides and ceramides in de novo synthesis and salvage pathways, respectively. Plays a non-redundant role in the synthesis of ceramides with very-long-chain fatty acids in kidney, liver and brain. Regulates the abundance of myelin-specific sphingolipids galactosylceramide and sulfatide that affects myelin sheath architecture and motor neuron functions. This Homo sapiens (Human) protein is Ceramide synthase 2.